Consider the following 280-residue polypeptide: Golgi phosphoprotein 3-like A (280 aa).

The disordered stretch occupies residues 1–32 (MTTLIRRGRRAEEGQERRADSEDSIKDKDEEE). Basic and acidic residues predominate over residues 10-32 (RAEEGQERRADSEDSIKDKDEEE). Trp-62, Arg-71, Arg-152, and Arg-155 together coordinate a 1,2-diacyl-sn-glycero-3-phospho-(1D-myo-inositol 4-phosphate). Residues 171-182 (EKQNFLLFDMTT) form a beta-hairpin required for oligomerization region.

This sequence belongs to the GOLPH3/VPS74 family. In terms of assembly, homooligomer.

Its subcellular location is the golgi apparatus. The protein resides in the golgi stack membrane. It is found in the trans-Golgi network membrane. Its function is as follows. Phosphatidylinositol-4-phosphate-binding protein that may play a role in the process of vesicle budding at the Golgi and anterograde transport to the plasma membrane. This chain is Golgi phosphoprotein 3-like A (golph3l-a), found in Xenopus laevis (African clawed frog).